Here is a 395-residue protein sequence, read N- to C-terminus: Xylose isomerase (395 aa).

Catalysis depends on residues His-54 and Asp-57. Mg(2+)-binding residues include Glu-181, Glu-217, His-220, Asp-245, Asp-255, Asp-257, and Asp-293.

The protein belongs to the xylose isomerase family. Homotetramer. It depends on Mg(2+) as a cofactor.

Its subcellular location is the cytoplasm. The enzyme catalyses alpha-D-xylose = alpha-D-xylulofuranose. This is Xylose isomerase (xylA) from Arthrobacter sp. (strain NRRL B3728).